The following is a 54-amino-acid chain: Small ribosomal subunit protein uS14 (54 aa).

Positions 19, 22, 37, and 40 each coordinate Zn(2+).

This sequence belongs to the universal ribosomal protein uS14 family. Zinc-binding uS14 subfamily. As to quaternary structure, part of the 30S ribosomal subunit. Zn(2+) is required as a cofactor.

Binds 16S rRNA, required for the assembly of 30S particles. In Aeropyrum pernix (strain ATCC 700893 / DSM 11879 / JCM 9820 / NBRC 100138 / K1), this protein is Small ribosomal subunit protein uS14.